A 193-amino-acid polypeptide reads, in one-letter code: Guanylate kinase (193 aa).

Residues 8 to 188 form the Guanylate kinase-like domain; that stretch reads GRLVVLVGPS…ACEQLVSLFV (181 aa). Residue 15–22 coordinates ATP; sequence GPSAVGKS.

The protein belongs to the guanylate kinase family.

The protein resides in the cytoplasm. It catalyses the reaction GMP + ATP = GDP + ADP. Essential for recycling GMP and indirectly, cGMP. The sequence is that of Guanylate kinase from Nocardia farcinica (strain IFM 10152).